The chain runs to 293 residues: Elongation factor Ts (293 aa).

The involved in Mg(2+) ion dislocation from EF-Tu stretch occupies residues 80-83; that stretch reads TDFV.

This sequence belongs to the EF-Ts family.

The protein localises to the cytoplasm. Associates with the EF-Tu.GDP complex and induces the exchange of GDP to GTP. It remains bound to the aminoacyl-tRNA.EF-Tu.GTP complex up to the GTP hydrolysis stage on the ribosome. The chain is Elongation factor Ts from Burkholderia pseudomallei (strain 1106a).